A 225-amino-acid polypeptide reads, in one-letter code: Membrin-11 (225 aa).

A2 is modified (N-acetylalanine). Residues 2–200 (ASGIVEGGGS…VLRLIERRNR (199 aa)) are Cytoplasmic-facing. Residues 201 to 221 (VDTWIKYAGMIATLVILYLFI) traverse the membrane as a helical; Anchor for type IV membrane protein segment. Topologically, residues 222–225 (RWTR) are vesicular.

It belongs to the GOSR2 family.

It is found in the golgi apparatus membrane. In terms of biological role, involved in transport of proteins from the cis/medial-Golgi to the trans-Golgi network. The sequence is that of Membrin-11 (MEMB11) from Arabidopsis thaliana (Mouse-ear cress).